Consider the following 509-residue polypeptide: Dihydrolipoyl dehydrogenase, mitochondrial (509 aa).

The N-terminal 35 residues, 1–35, are a transit peptide targeting the mitochondrion; it reads MQSWSRVYCSLAKRGHFNRISHGLQGLSAVPLRTY. K66 is modified (N6-acetyllysine; alternate). N6-succinyllysine; alternate is present on K66. FAD contacts are provided by residues 71–80 and K89; that span reads EKNETLGGTC. A disulfide bridge connects residues C80 and C85. 4 positions are modified to N6-acetyllysine; alternate: K104, K122, K132, and K143. Residues K104, K122, K132, and K143 each carry the N6-succinyllysine; alternate modification. G154 serves as a coordination point for FAD. K159 and K166 each carry N6-succinyllysine. 183–185 contributes to the FAD binding site; the sequence is TGS. NAD(+)-binding positions include 220–227 and E243; that span reads GAGVIGVE. An N6-succinyllysine mark is found at K273 and K277. Residue V278 participates in NAD(+) binding. S285 and S297 each carry phosphoserine. An NAD(+)-binding site is contributed by G314. The residue at position 346 (K346) is an N6-acetyllysine. Residues D355 and 361–364 contribute to the FAD site; that span reads MLAH. At K410 the chain carries N6-acetyllysine; alternate. K410 carries the post-translational modification N6-succinyllysine; alternate. Residues K417 and K420 each carry the N6-acetyllysine modification. K430 is subject to N6-succinyllysine. H487 acts as the Proton acceptor in catalysis. S502 is subject to Phosphoserine. Residue K505 is modified to N6-acetyllysine; alternate. N6-succinyllysine; alternate is present on K505.

This sequence belongs to the class-I pyridine nucleotide-disulfide oxidoreductase family. In terms of assembly, homodimer. Part of the multimeric pyruvate dehydrogenase complex that contains multiple copies of pyruvate dehydrogenase (subunits PDHA (PDHA1 or PDHA2) and PDHB, E1), dihydrolipoamide acetyltransferase (DLAT, E2) and lipoamide dehydrogenase (DLD, E3). These subunits are bound to an inner core composed of about 48 DLAT and 12 PDHX molecules (by non covalent bonds). The 2-oxoglutarate dehydrogenase complex is composed of OGDH (2-oxoglutarate dehydrogenase; E1), DLST (dihydrolipoamide succinyltransferase; E2), DLD (dihydrolipoamide dehydrogenase; E3) and the assembly factor KGD4. It contains multiple copies of the three enzymatic components (E1, E2 and E3). In the nucleus, the 2-oxoglutarate dehydrogenase complex associates with KAT2A. Interacts with PDHX. FAD is required as a cofactor. In terms of processing, tyrosine phosphorylated.

It localises to the mitochondrion matrix. Its subcellular location is the nucleus. The protein resides in the cell projection. It is found in the cilium. The protein localises to the flagellum. It localises to the cytoplasmic vesicle. Its subcellular location is the secretory vesicle. The protein resides in the acrosome. It carries out the reaction N(6)-[(R)-dihydrolipoyl]-L-lysyl-[protein] + NAD(+) = N(6)-[(R)-lipoyl]-L-lysyl-[protein] + NADH + H(+). Lipoamide dehydrogenase is a component of the glycine cleavage system as well as an E3 component of three alpha-ketoacid dehydrogenase complexes (pyruvate-, alpha-ketoglutarate-, and branched-chain amino acid-dehydrogenase complex). The 2-oxoglutarate dehydrogenase complex is mainly active in the mitochondrion. A fraction of the 2-oxoglutarate dehydrogenase complex also localizes in the nucleus and is required for lysine succinylation of histones: associates with KAT2A on chromatin and provides succinyl-CoA to histone succinyltransferase KAT2A. In monomeric form may have additional moonlighting function as serine protease. Involved in the hyperactivation of spermatazoa during capacitation and in the spermatazoal acrosome reaction. The polypeptide is Dihydrolipoyl dehydrogenase, mitochondrial (DLD) (Pongo abelii (Sumatran orangutan)).